A 344-amino-acid polypeptide reads, in one-letter code: Ras association domain-containing protein 1 (344 aa).

The residue at position 2 (S2) is an N-acetylserine. A Phosphoserine modification is found at S2. The mediates interaction with E4F1 stretch occupies residues 2–119 (SGEPELIELR…DLGWEPAVER (118 aa)). Residue R36 is modified to Omega-N-methylarginine. A Phorbol-ester/DAG-type zinc finger spans residues 51–105 (GHRFQPAGPATHTWCDLCGDFIWGVVRKGLQCARLSADCKFTCHYRCRALVCLDC). Low complexity predominate over residues 179–189 (SVPSSKKPPSL). Positions 179-203 (SVPSSKKPPSLQDARRGPGRGTSVR) are disordered. One can recognise a Ras-associating domain in the interval 198–292 (RGTSVRRRTS…LSFVLKENDS (95 aa)). Positions 294–341 (EVNWDAFSMPELHNFLRILQREEEEHLRQILQKYSYCRQKIQEALHAC) constitute an SARAH domain. The interval 315–318 (EEEE) is MOAP1-binding.

Interacts with MAP1S. Interacts with XPA. Binds to the N-terminal of CDC20 during prometaphase. Binds to STK3/MST2 and STK4/MST1. Recruited to the TNFRSF1A and TNFRSF10A complexes in response to their respective cognate ligand, after internalization. Can self-associate. Part of a complex with MDM2, DAXX, RASSF1 and USP7. Interacts with ECM2. As to quaternary structure, interacts with MOAP1. Interacts with E4F1. Interacts with RSSF5 and probably associates with HRAS via a RSSF1 isoform A-RSSF5 heterodimer. Interacts (via C-terminus) with DAXX (via N-terminus); the interaction is independent of MDM2 and TP53. Interacts (via N-terminus) with MDM2 (via C-terminus); the interaction is independent of TP53. Interacts with RAB39A. Interacts with RAB39B; the interaction is weak. In terms of assembly, interacts (via N-terminus) with DAXX. Interacts with RAB39B; the interaction is strong. Does not interact with RAB39A. Interacts (via N-terminus) with DAXX. In terms of tissue distribution, isoform A and isoform C are ubiquitously expressed in all tissues tested, however isoform A is absent in many corresponding cancer cell lines. Isoform B is mainly expressed in hematopoietic cells.

The protein resides in the cytoplasm. The protein localises to the cytoskeleton. It localises to the microtubule organizing center. It is found in the centrosome. Its subcellular location is the spindle. The protein resides in the spindle pole. The protein localises to the nucleus. Potential tumor suppressor. Required for death receptor-dependent apoptosis. Mediates activation of STK3/MST2 and STK4/MST1 during Fas-induced apoptosis by preventing their dephosphorylation. When associated with MOAP1, promotes BAX conformational change and translocation to mitochondrial membranes in response to TNF and TNFSF10 stimulation. Isoform A interacts with CDC20, an activator of the anaphase-promoting complex, APC, resulting in the inhibition of APC activity and mitotic progression. Inhibits proliferation by negatively regulating cell cycle progression at the level of G1/S-phase transition by regulating accumulation of cyclin D1 protein. Isoform C has been shown not to perform these roles, no function has been identified for this isoform. Isoform A disrupts interactions among MDM2, DAXX and USP7, thus contributing to the efficient activation of TP53 by promoting MDM2 self-ubiquitination in cell-cycle checkpoint control in response to DNA damage. This chain is Ras association domain-containing protein 1, found in Homo sapiens (Human).